A 441-amino-acid chain; its full sequence is Serine carboxypeptidase-like 3 (441 aa).

A signal peptide spans 1-30; that stretch reads MASNYVFSVLRSLLLLIHTVFLGQHHVSSA. Disulfide bonds link C88–C331, C252–C266, and C290–C297. The N-linked (GlcNAc...) asparagine glycan is linked to N109. S184 is an active-site residue. A glycan (N-linked (GlcNAc...) asparagine) is linked at N350. Residue D366 is part of the active site. N382 carries N-linked (GlcNAc...) asparagine glycosylation. Residue H419 is part of the active site.

Belongs to the peptidase S10 family. In terms of tissue distribution, expressed in roots.

The protein resides in the secreted. Probable carboxypeptidase. The sequence is that of Serine carboxypeptidase-like 3 (SCPL3) from Arabidopsis thaliana (Mouse-ear cress).